The sequence spans 125 residues: Small ribosomal subunit protein uS12 (125 aa).

Asp89 is subject to 3-methylthioaspartic acid. The interval 105–125 (AGVKDRKQARSKYGAKRPKAA) is disordered. The span at 113-125 (ARSKYGAKRPKAA) shows a compositional bias: basic residues.

Belongs to the universal ribosomal protein uS12 family. In terms of assembly, part of the 30S ribosomal subunit. Contacts proteins S8 and S17. May interact with IF1 in the 30S initiation complex.

Its function is as follows. With S4 and S5 plays an important role in translational accuracy. Functionally, interacts with and stabilizes bases of the 16S rRNA that are involved in tRNA selection in the A site and with the mRNA backbone. Located at the interface of the 30S and 50S subunits, it traverses the body of the 30S subunit contacting proteins on the other side and probably holding the rRNA structure together. The combined cluster of proteins S8, S12 and S17 appears to hold together the shoulder and platform of the 30S subunit. This Methylobacillus flagellatus (strain ATCC 51484 / DSM 6875 / VKM B-1610 / KT) protein is Small ribosomal subunit protein uS12.